Reading from the N-terminus, the 225-residue chain is NAD(P)H-quinone oxidoreductase subunit K, chloroplastic (225 aa).

[4Fe-4S] cluster contacts are provided by Cys-43, Cys-44, Cys-108, and Cys-139.

Belongs to the complex I 20 kDa subunit family. NDH is composed of at least 16 different subunits, 5 of which are encoded in the nucleus. Requires [4Fe-4S] cluster as cofactor.

The protein resides in the plastid. It is found in the chloroplast thylakoid membrane. It carries out the reaction a plastoquinone + NADH + (n+1) H(+)(in) = a plastoquinol + NAD(+) + n H(+)(out). It catalyses the reaction a plastoquinone + NADPH + (n+1) H(+)(in) = a plastoquinol + NADP(+) + n H(+)(out). Functionally, NDH shuttles electrons from NAD(P)H:plastoquinone, via FMN and iron-sulfur (Fe-S) centers, to quinones in the photosynthetic chain and possibly in a chloroplast respiratory chain. The immediate electron acceptor for the enzyme in this species is believed to be plastoquinone. Couples the redox reaction to proton translocation, and thus conserves the redox energy in a proton gradient. The protein is NAD(P)H-quinone oxidoreductase subunit K, chloroplastic of Amborella trichopoda.